Reading from the N-terminus, the 388-residue chain is Succinate--CoA ligase [ADP-forming] subunit beta (388 aa).

The 236-residue stretch at 9 to 244 (KGILSGFDVR…PHEYSEEELE (236 aa)) folds into the ATP-grasp domain. ATP-binding positions include K46, 53 to 55 (GRG), E99, V102, and E107. Residues N199 and D213 each coordinate Mg(2+). Substrate is bound by residues N264 and 320–322 (GIM).

Belongs to the succinate/malate CoA ligase beta subunit family. As to quaternary structure, heterotetramer of two alpha and two beta subunits. It depends on Mg(2+) as a cofactor.

The enzyme catalyses succinate + ATP + CoA = succinyl-CoA + ADP + phosphate. It catalyses the reaction GTP + succinate + CoA = succinyl-CoA + GDP + phosphate. Its pathway is carbohydrate metabolism; tricarboxylic acid cycle; succinate from succinyl-CoA (ligase route): step 1/1. Its function is as follows. Succinyl-CoA synthetase functions in the citric acid cycle (TCA), coupling the hydrolysis of succinyl-CoA to the synthesis of either ATP or GTP and thus represents the only step of substrate-level phosphorylation in the TCA. The beta subunit provides nucleotide specificity of the enzyme and binds the substrate succinate, while the binding sites for coenzyme A and phosphate are found in the alpha subunit. In Anaplasma phagocytophilum (strain HZ), this protein is Succinate--CoA ligase [ADP-forming] subunit beta.